A 254-amino-acid polypeptide reads, in one-letter code: MHINHISVGNRLLPLSFQCAAGEKVYVAGPNGSGKSTLLSAIAGTLSSREGVKGEVLINETSLLTLPLAEQAIYRAYLCQQSRPAFNVDVFQMLALSLPAGRHVVEPEVQAAVRRVVELVQLQDKLHRSVQALSGGEWQRVRLAAVCLQVWRSLNPYSQLLILDEPAAPLDVAQAKWLYQLIDEMAAQGLVVIVANHDLNRVYQHADKVLLLNQGVLTAYGSADEVMSVENLQQVFETPVKKVAVDGQPYLIFT.

Positions 1–239 (MHINHISVGN…ENLQQVFETP (239 aa)) constitute an ABC transporter domain. 29–36 (GPNGSGKS) is a binding site for ATP.

Belongs to the ABC transporter superfamily. Vitamin B12 importer (TC 3.A.1.13.1) family. As to quaternary structure, the complex is composed of two ATP-binding proteins (BtuD), two transmembrane proteins (BtuC) and a solute-binding protein (BtuF).

Its subcellular location is the cell inner membrane. It carries out the reaction an R-cob(III)alamin(out) + ATP + H2O = an R-cob(III)alamin(in) + ADP + phosphate + H(+). Its function is as follows. Part of the ABC transporter complex BtuCDF involved in vitamin B12 import. Responsible for energy coupling to the transport system. In Vibrio vulnificus (strain YJ016), this protein is Vitamin B12 import ATP-binding protein BtuD.